Consider the following 546-residue polypeptide: MESNNGEAKIQKVKNWSPVWIFPIVTALIGAWVLFYHYSHQGPEVTLITANAEGIEGGKTTIKSRSVDVGVVESATLADDLTHVEIKARLNSGMEKLLHKDTVFWVVKPQIGREGISGLGTLLSGVYIELQPGAKGSKMDKYDLLDSPPLAPPDAKGIRVILDSKKAGQLSPGDPVLFRGYRVGSVETSTFDTQKRNISYQLFINAPYDRLVTNNVRFWKDSGIAVDLTSAGMRVEMGSLTTLLSGGVSFDVPEGLDLGQPVAPKTAFVLYDDQKSIQDSLYTDHIDYLMFFKDSVRGLQPGAPVEFRGIRLGTVSKVPFFAPNMRQTFNDDYRIPVLIRIEPERLKMQLGENADVVEHLGELLKRGLRGSLKTGNLVTGALYVDLDFYPNTPAITGIREFNGYQIIPTVSGGLAQIQQRLMEALDKINKLPLNPMIEQATSTLSESQRTMKNLQTTLDSMNKILASQSMQQLPTDMQSTLRELNRSMQGFQPGSAAYNKMVADMQRLDQVLRELQPVLKTLNEKSNALVFEAKDKKDPEPKRAKQ.

Residues 1 to 15 (MESNNGEAKIQKVKN) are Cytoplasmic-facing. A helical membrane pass occupies residues 16 to 36 (WSPVWIFPIVTALIGAWVLFY). Residues 37–546 (HYSHQGPEVT…KDPEPKRAKQ (510 aa)) are Periplasmic-facing. MCE/MlaD stretches follow at residues 42–133 (GPEV…LQPG), 158–217 (IRVI…NNVR), and 285–389 (HIDY…LDFY). Residues 437–464 (IEQATSTLSESQRTMKNLQTTLDSMNKI) adopt a coiled-coil conformation.

This sequence belongs to the PqiB family. In terms of assembly, homohexamer. May form a complex composed of PqiA, PqiB and PqiC. Interacts with PqiC.

The protein resides in the cell inner membrane. Its function is as follows. Forms a tunnel that spans the entire periplasmic space. Could be implicated in lipid transport between the inner membrane and the outer membrane. Binds phospholipids. Required for outer membrane homeostasis. Contributes to membrane integrity. This Escherichia coli (strain K12) protein is Intermembrane transport protein PqiB.